Here is an 82-residue protein sequence, read N- to C-terminus: Small ribosomal subunit protein bS18 (82 aa).

Positions 1-20 are disordered; that stretch reads MVDINQIPTRRPFHRRRKTC.

The protein belongs to the bacterial ribosomal protein bS18 family. As to quaternary structure, part of the 30S ribosomal subunit. Forms a tight heterodimer with protein bS6.

Its function is as follows. Binds as a heterodimer with protein bS6 to the central domain of the 16S rRNA, where it helps stabilize the platform of the 30S subunit. This is Small ribosomal subunit protein bS18 from Mesorhizobium japonicum (strain LMG 29417 / CECT 9101 / MAFF 303099) (Mesorhizobium loti (strain MAFF 303099)).